The primary structure comprises 139 residues: MAVAAVKWVMSKRTILKHLFPVQNGALYCVCHKSTYSPLPDDYNCSVELALTSDGRTIVCYHPSVDIPYEHTKPIPRPDPVHNNEETHDQVLKTRLEEKVEHLEEGPMIEQLSKMFFTTKHRWYPHGRCRKNLNPPKDR.

The N-terminal 32 residues, 1–32 (MAVAAVKWVMSKRTILKHLFPVQNGALYCVCH), are a transit peptide targeting the mitochondrion.

Belongs to the mitochondrion-specific ribosomal protein mL42 family. Component of the mitochondrial ribosome large subunit (39S) which comprises a 16S rRNA and about 50 distinct proteins. Component of the mitochondrial ribosome small subunit (28S) which comprises a 12S rRNA and about 30 distinct proteins.

It localises to the mitochondrion. The protein is Large ribosomal subunit protein mL42 (MRPL42) of Pongo abelii (Sumatran orangutan).